Consider the following 427-residue polypeptide: ATP-sensitive inward rectifier potassium channel 12 (427 aa).

Residues 1–77 (MTAASRANPY…LADMFTTCVD (77 aa)) lie on the Cytoplasmic side of the membrane. The residue at position 75 (Cys-75) is an S-nitrosocysteine. A helical membrane pass occupies residues 78 to 104 (IRWRYMLLIFSLAFLASWLLFGIIFWV). A 1,2-diacyl-sn-glycero-3-phospho-(1D-myo-inositol-4,5-bisphosphate) contacts are provided by Arg-79 and Arg-81. Residues 105–129 (IAVAHGDLEPAEGRGRTPCVLQVHG) are Extracellular-facing. A disulfide bridge links Cys-123 with Cys-155. The segment at residues 130 to 146 (FMAAFLFSIETQTTIGY) is an intramembrane region (helical; Pore-forming). Thr-143, Ile-144, Gly-145, and Tyr-146 together coordinate K(+). The short motif at 143-148 (TIGYGL) is the Selectivity filter element. Over 147-155 (GLRCVTEEC) the chain is Extracellular. Residues 156 to 183 (PVAVFMVVAQSIVGCIIDSFMIGAIMAK) traverse the membrane as a helical segment. A 1,2-diacyl-sn-glycero-3-phospho-(1D-myo-inositol-4,5-bisphosphate) is bound by residues Lys-183 and Lys-188. Residues 184-427 (MGRPKKRAQT…ERPYRRESEI (244 aa)) are Cytoplasmic-facing. The disordered stretch occupies residues 387-427 (DEEDEVATDRDGRSPQPEHDFDRLQASSGALERPYRRESEI). The segment covering 393–409 (ATDRDGRSPQPEHDFDR) has biased composition (basic and acidic residues). The PDZ-binding motif lies at 425–427 (SEI).

It belongs to the inward rectifier-type potassium channel (TC 1.A.2.1) family. KCNJ12 subfamily. In terms of assembly, homotetramer. Forms heteromer with KCNJ4. Can form heteromeric channels with Kir2.6/KCNJ18. Association, via its PDZ-recognition domain, with LIN7A, LIN7B, LIN7C, DLG1, CASK and APBA1 plays a key role in its localization and trafficking. As to expression, highest level in cerebellum. Moderately found in kidney, forebrain and skeletal muscle. Not detected in uterus, liver and pancreas.

The protein resides in the membrane. Its subcellular location is the cell membrane. It is found in the sarcolemma. It localises to the T-tubule. It carries out the reaction K(+)(in) = K(+)(out). Its activity is regulated as follows. Activated by phosphatidylinositol 4,5-biphosphate (PtdIns(4,5)P2). PtdIns(4,5)P2 binding to the cytoplasmic side of the channel triggers a conformation change leading to channel opening. Inhibited by Ba(2+). Functionally, inward rectifying potassium channel that probably participates in controlling the resting membrane potential in electrically excitable cells. It probably participates in establishing action potential waveform and excitability of neuronal and muscle tissues. Inward rectifier potassium channels are characterized by a greater tendency to allow potassium to flow into the cell rather than out of it. Their voltage dependence is regulated by the concentration of extracellular potassium; as external potassium is raised, the voltage range of the channel opening shifts to more positive voltages. The inward rectification is mainly due to the blockage of outward current by internal magnesium. The sequence is that of ATP-sensitive inward rectifier potassium channel 12 (Kcnj12) from Rattus norvegicus (Rat).